The following is a 237-amino-acid chain: 2,3-bisphosphoglycerate-dependent phosphoglycerate mutase (237 aa).

Substrate-binding positions include 10-17 (RHGESKWN), 23-24 (TG), Arg-62, 89-92 (ERHY), Lys-100, 116-117 (RR), and 185-186 (GN). The active-site Tele-phosphohistidine intermediate is His-11. Glu-89 acts as the Proton donor/acceptor in catalysis.

It belongs to the phosphoglycerate mutase family. BPG-dependent PGAM subfamily. As to quaternary structure, homodimer.

It carries out the reaction (2R)-2-phosphoglycerate = (2R)-3-phosphoglycerate. Its pathway is carbohydrate degradation; glycolysis; pyruvate from D-glyceraldehyde 3-phosphate: step 3/5. In terms of biological role, catalyzes the interconversion of 2-phosphoglycerate and 3-phosphoglycerate. In Baumannia cicadellinicola subsp. Homalodisca coagulata, this protein is 2,3-bisphosphoglycerate-dependent phosphoglycerate mutase.